The following is a 336-amino-acid chain: Anthranilate phosphoribosyltransferase (336 aa).

5-phospho-alpha-D-ribose 1-diphosphate contacts are provided by residues Gly82, Gly85–Asp86, Thr90, Asn92–Thr95, Lys110–Gly118, and Ser122. Anthranilate is bound at residue Gly82. Residue Ser94 coordinates Mg(2+). Asn113 lines the anthranilate pocket. Arg168 lines the anthranilate pocket. Asp227 and Glu228 together coordinate Mg(2+).

The protein belongs to the anthranilate phosphoribosyltransferase family. Homodimer. Mg(2+) is required as a cofactor.

The enzyme catalyses N-(5-phospho-beta-D-ribosyl)anthranilate + diphosphate = 5-phospho-alpha-D-ribose 1-diphosphate + anthranilate. It functions in the pathway amino-acid biosynthesis; L-tryptophan biosynthesis; L-tryptophan from chorismate: step 2/5. Its function is as follows. Catalyzes the transfer of the phosphoribosyl group of 5-phosphorylribose-1-pyrophosphate (PRPP) to anthranilate to yield N-(5'-phosphoribosyl)-anthranilate (PRA). This is Anthranilate phosphoribosyltransferase from Desulfitobacterium hafniense (strain DSM 10664 / DCB-2).